Reading from the N-terminus, the 108-residue chain is UPF0235 protein RB8260 (108 aa).

The protein belongs to the UPF0235 family.

The protein is UPF0235 protein RB8260 of Rhodopirellula baltica (strain DSM 10527 / NCIMB 13988 / SH1).